The chain runs to 173 residues: MGAQRASMQRPAADTPDGFGVAVVREEGRWRCSPMGPKALTSLRAAETELRELRSAGAVFGLLDVDDEFFVIVRPAPSGTRLLLSDATAALDYDIAAEVLDNLDAEIDPEDLEDADPFEEGDLGLLSDIGLPEAVLGVILDETDLYADEQLGRIAREMGFADQLSAVIDRLGR.

The protein is Protein Rv3753c of Mycobacterium tuberculosis (strain ATCC 25618 / H37Rv).